The chain runs to 430 residues: Neuropeptide FF receptor 1 (430 aa).

A disordered region spans residues 1-20; the sequence is MEGEPSQPPNSSWPLSQNGT. Topologically, residues 1-43 are extracellular; sequence MEGEPSQPPNSSWPLSQNGTNTEATPATNLTFSSYYQHTSPVA. The span at 9 to 20 shows a compositional bias: polar residues; it reads PNSSWPLSQNGT. N-linked (GlcNAc...) asparagine glycosylation is found at asparagine 10, asparagine 18, and asparagine 29. Residues 44 to 64 form a helical membrane-spanning segment; it reads AMFIVAYALIFLLCMVGNTLV. The Cytoplasmic portion of the chain corresponds to 65–80; that stretch reads CFIVLKNRHMHTVTNM. The chain crosses the membrane as a helical span at residues 81–101; sequence FILNLAVSDLLVGIFCMPTTL. Over 102 to 117 the chain is Extracellular; that stretch reads VDNLITGWPFDNATCK. Asparagine 113 carries N-linked (GlcNAc...) asparagine glycosylation. The cysteines at positions 116 and 203 are disulfide-linked. A helical transmembrane segment spans residues 118–138; that stretch reads MSGLVQGMSVSASVFTLVAIA. The Cytoplasmic portion of the chain corresponds to 139-158; sequence VERFRCIVHPFREKLTLRKA. The helical transmembrane segment at 159–179 threads the bilayer; the sequence is LVTIAVIWALALLIMCPSAVT. Topologically, residues 180–214 are extracellular; the sequence is LTVTREEHHFMVDARNRSYPLYSCWEAWPEKGMRR. An N-linked (GlcNAc...) asparagine glycan is attached at asparagine 195. Residues 215 to 235 traverse the membrane as a helical segment; sequence VYTTVLFSHIYLAPLALIVVM. The Cytoplasmic segment spans residues 236 to 271; sequence YARIARKLCQAPGPAPGGEEAADPRASRRRARVVHM. The chain crosses the membrane as a helical span at residues 272–292; it reads LVMVALFFTLSWLPLWALLLL. Over 293–307 the chain is Extracellular; sequence IDYGQLSAPQLHLVT. A helical membrane pass occupies residues 308–328; it reads VYAFPFAHWLAFFNSSANPII. The Cytoplasmic portion of the chain corresponds to 329–430; it reads YGYFNENFRR…LPLTIPAWDI (102 aa). Over residues 379–404 the composition is skewed to low complexity; it reads SDSGLPSESGPSSGAPRPGRLPLRNG. The segment at 379–413 is disordered; it reads SDSGLPSESGPSSGAPRPGRLPLRNGRVAHHGLPR.

This sequence belongs to the G-protein coupled receptor 1 family.

The protein localises to the cell membrane. In terms of biological role, receptor for NPAF (A-18-F-amide) and NPFF (F-8-F-amide) neuropeptides, also known as morphine-modulating peptides. Can also be activated by a variety of naturally occurring or synthetic FMRF-amide like ligands. This receptor mediates its action by association with G proteins that activate a phosphatidylinositol-calcium second messenger system. This chain is Neuropeptide FF receptor 1, found in Homo sapiens (Human).